The chain runs to 199 residues: N-(5'-phosphoribosyl)anthranilate isomerase (199 aa).

It belongs to the TrpF family.

The enzyme catalyses N-(5-phospho-beta-D-ribosyl)anthranilate = 1-(2-carboxyphenylamino)-1-deoxy-D-ribulose 5-phosphate. It functions in the pathway amino-acid biosynthesis; L-tryptophan biosynthesis; L-tryptophan from chorismate: step 3/5. The sequence is that of N-(5'-phosphoribosyl)anthranilate isomerase from Streptococcus pneumoniae serotype 4 (strain ATCC BAA-334 / TIGR4).